We begin with the raw amino-acid sequence, 185 residues long: Threonylcarbamoyl-AMP synthase (185 aa).

The YrdC-like domain maps to 1 to 185 (MKNFEQVLKA…AKTSQILRQG (185 aa)). The interval 163–185 (ETSGRNKPSEIRDAKTSQILRQG) is disordered. Residues 164–177 (TSGRNKPSEIRDAK) show a composition bias toward basic and acidic residues.

Belongs to the SUA5 family. TsaC subfamily.

It localises to the cytoplasm. It catalyses the reaction L-threonine + hydrogencarbonate + ATP = L-threonylcarbamoyladenylate + diphosphate + H2O. In terms of biological role, required for the formation of a threonylcarbamoyl group on adenosine at position 37 (t(6)A37) in tRNAs that read codons beginning with adenine. Catalyzes the conversion of L-threonine, HCO(3)(-)/CO(2) and ATP to give threonylcarbamoyl-AMP (TC-AMP) as the acyladenylate intermediate, with the release of diphosphate. The sequence is that of Threonylcarbamoyl-AMP synthase from Vibrio campbellii (strain ATCC BAA-1116).